A 236-amino-acid chain; its full sequence is MILLVSPKDVAEAYEAIEGGADIIDVKNPPEGSLGANFPWVIKETREATPEGMLVSAAIGDVPYKPGTVTLAALGATVSGADYIKVGLYGTRSYQEALDVMKNVTKAVKDAGENKIVVAAGYADAYRVGAVDPLVIPKVARDAGCDVAMLDTAVKDGKTLFDHMDLDLLREFVEETHKYGMKCALAGSIKIEEIPMLKEIGCDIVGVRGAACTQGDRNAGRIQKDLVKEIVKVCRD.

Residue Lys27 is the Schiff-base intermediate with substrate of the active site. Residue Lys85 is the Proton acceptor of the active site.

This sequence belongs to the MfnB family.

The enzyme catalyses 2 D-glyceraldehyde 3-phosphate = 4-(hydroxymethyl)-2-furancarboxaldehyde phosphate + phosphate + 2 H2O. The protein operates within cofactor biosynthesis; methanofuran biosynthesis. Functionally, catalyzes the formation of 4-(hydroxymethyl)-2-furancarboxaldehyde phosphate (4-HFC-P) from two molecules of glyceraldehyde-3-P (GA-3-P). This is (5-formylfuran-3-yl)methyl phosphate synthase from Methanococcus maripaludis (strain DSM 14266 / JCM 13030 / NBRC 101832 / S2 / LL).